Consider the following 259-residue polypeptide: Global transcriptional regulator CodY (259 aa).

Positions 1 to 155 (MALLQKTRII…GATVVGMEIL (155 aa)) are GAF domain. Residues 203–222 (ASKIADRVGITRSVIVNALR) constitute a DNA-binding region (H-T-H motif). S215 carries the post-translational modification Phosphoserine.

This sequence belongs to the CodY family.

The protein localises to the cytoplasm. In terms of biological role, DNA-binding global transcriptional regulator which is involved in the adaptive response to starvation and acts by directly or indirectly controlling the expression of numerous genes in response to nutrient availability. During rapid exponential growth, CodY is highly active and represses genes whose products allow adaptation to nutrient depletion. This chain is Global transcriptional regulator CodY, found in Bacillus velezensis (strain DSM 23117 / BGSC 10A6 / LMG 26770 / FZB42) (Bacillus amyloliquefaciens subsp. plantarum).